The primary structure comprises 409 residues: Calsequestrin-2 (409 aa).

The N-terminal stretch at Met-1–Ala-19 is a signal peptide. Tyr-282 is subject to Phosphotyrosine. N-linked (GlcNAc...) asparagine glycosylation is present at Asn-335. The tract at residues Asp-364–Glu-409 is disordered. Residues Glu-373–Glu-409 show a composition bias toward acidic residues.

It belongs to the calsequestrin family. In terms of assembly, monomer, homodimer and homooligomer. Mostly monomeric in the absence of calcium. Forms higher oligomers in a calcium-dependent manner. Dimers associate to form tetramers, that then form linear homomer chains. Interacts with ASPH and TRDN. Phosphorylation in the C-terminus, probably by CK2, moderately increases calcium buffering capacity. In terms of processing, N-glycosylated. As to expression, detected in heart muscle (at protein level).

It localises to the sarcoplasmic reticulum lumen. Its function is as follows. Calsequestrin is a high-capacity, moderate affinity, calcium-binding protein and thus acts as an internal calcium store in muscle. Calcium ions are bound by clusters of acidic residues at the protein surface, especially at the interface between subunits. Can bind around 60 Ca(2+) ions. Regulates the release of lumenal Ca(2+) via the calcium release channel RYR2; this plays an important role in triggering muscle contraction. Plays a role in excitation-contraction coupling in the heart and in regulating the rate of heart beats. The protein is Calsequestrin-2 (CASQ2) of Oryctolagus cuniculus (Rabbit).